The following is a 476-amino-acid chain: Bifunctional protein HldE (476 aa).

The tract at residues 1–319 (MKVSLPAFEK…RALSVNHGES (319 aa)) is ribokinase. 195–198 (NMGE) is a binding site for ATP. Asp264 is an active-site residue. The interval 345–476 (MTNGCFDILH…SIIENIMANQ (132 aa)) is cytidylyltransferase.

The protein in the N-terminal section; belongs to the carbohydrate kinase PfkB family. It in the C-terminal section; belongs to the cytidylyltransferase family. Homodimer.

It carries out the reaction D-glycero-beta-D-manno-heptose 7-phosphate + ATP = D-glycero-beta-D-manno-heptose 1,7-bisphosphate + ADP + H(+). The enzyme catalyses D-glycero-beta-D-manno-heptose 1-phosphate + ATP + H(+) = ADP-D-glycero-beta-D-manno-heptose + diphosphate. It participates in nucleotide-sugar biosynthesis; ADP-L-glycero-beta-D-manno-heptose biosynthesis; ADP-L-glycero-beta-D-manno-heptose from D-glycero-beta-D-manno-heptose 7-phosphate: step 1/4. The protein operates within nucleotide-sugar biosynthesis; ADP-L-glycero-beta-D-manno-heptose biosynthesis; ADP-L-glycero-beta-D-manno-heptose from D-glycero-beta-D-manno-heptose 7-phosphate: step 3/4. Functionally, catalyzes the phosphorylation of D-glycero-D-manno-heptose 7-phosphate at the C-1 position to selectively form D-glycero-beta-D-manno-heptose-1,7-bisphosphate. In terms of biological role, catalyzes the ADP transfer from ATP to D-glycero-beta-D-manno-heptose 1-phosphate, yielding ADP-D-glycero-beta-D-manno-heptose. This is Bifunctional protein HldE from Shewanella sediminis (strain HAW-EB3).